The sequence spans 349 residues: Small ribosomal subunit biogenesis GTPase RsgA (349 aa).

Residues 1-11 (MSKKKLSKGQQ) are compositionally biased toward basic residues. A disordered region spans residues 1–29 (MSKKKLSKGQQRRVSANHQRRLKKTESKV). In terms of domain architecture, CP-type G spans 102–272 (HSVLTRPDYY…VIDSPGVREF (171 aa)). GTP-binding positions include 158–161 (NKID) and 212–220 (GQSGVGKSS). 4 residues coordinate Zn(2+): Cys-296, Cys-301, His-303, and Cys-309.

Belongs to the TRAFAC class YlqF/YawG GTPase family. RsgA subfamily. Monomer. Associates with 30S ribosomal subunit, binds 16S rRNA. Zn(2+) serves as cofactor.

It is found in the cytoplasm. In terms of biological role, one of several proteins that assist in the late maturation steps of the functional core of the 30S ribosomal subunit. Helps release RbfA from mature subunits. May play a role in the assembly of ribosomal proteins into the subunit. Circularly permuted GTPase that catalyzes slow GTP hydrolysis, GTPase activity is stimulated by the 30S ribosomal subunit. The protein is Small ribosomal subunit biogenesis GTPase RsgA of Pectobacterium carotovorum subsp. carotovorum (strain PC1).